Here is a 389-residue protein sequence, read N- to C-terminus: S-adenosylmethionine synthase (389 aa).

Residue H17 coordinates ATP. A Mg(2+)-binding site is contributed by D19. Residue E45 participates in K(+) binding. L-methionine is bound by residues E58 and Q101. The segment at Q101 to E111 is flexible loop. ATP is bound by residues D168 to K170, R234 to F235, D243, R249 to K250, A266, and K270. D243 lines the L-methionine pocket. K274 is a binding site for L-methionine.

Belongs to the AdoMet synthase family. Homotetramer; dimer of dimers. The cofactor is Mg(2+). It depends on K(+) as a cofactor.

The protein resides in the cytoplasm. It catalyses the reaction L-methionine + ATP + H2O = S-adenosyl-L-methionine + phosphate + diphosphate. It participates in amino-acid biosynthesis; S-adenosyl-L-methionine biosynthesis; S-adenosyl-L-methionine from L-methionine: step 1/1. Catalyzes the formation of S-adenosylmethionine (AdoMet) from methionine and ATP. The overall synthetic reaction is composed of two sequential steps, AdoMet formation and the subsequent tripolyphosphate hydrolysis which occurs prior to release of AdoMet from the enzyme. The polypeptide is S-adenosylmethionine synthase (Geobacter sulfurreducens (strain ATCC 51573 / DSM 12127 / PCA)).